Here is a 557-residue protein sequence, read N- to C-terminus: Potassium-transporting ATPase potassium-binding subunit (557 aa).

The next 12 helical transmembrane spans lie at 5 to 25 (GFLLIATFLLVLMVLARPLGS), 63 to 83 (LCAILGLNMLGLAVLFFMLLG), 132 to 152 (GLTVQNFLSAASGIAVIFALI), 170 to 190 (LLRITLWVLVPVALVIALFFI), 253 to 273 (FVQMLAIFLIPTALCFAFGEV), 283 to 303 (LLWAMSVIFVICVGVVMWAEV), 329 to 349 (VLVSSLFAVVTTAASCGAVIA), 356 to 376 (ALGGMVPMWLMQIGEVVFGGV), 379 to 399 (GLYGMMLFVLLAVFIAGLMIG), 416 to 436 (LTALAILVTPTLVLMGAALAM), 484 to 504 (LLAFCMFVGRFGVIIPVMAIA), and 526 to 546 (LFVGLLIGTVLLVGALTFIPA).

This sequence belongs to the KdpA family. As to quaternary structure, the system is composed of three essential subunits: KdpA, KdpB and KdpC.

It localises to the cell inner membrane. In terms of biological role, part of the high-affinity ATP-driven potassium transport (or Kdp) system, which catalyzes the hydrolysis of ATP coupled with the electrogenic transport of potassium into the cytoplasm. This subunit binds the periplasmic potassium ions and delivers the ions to the membrane domain of KdpB through an intramembrane tunnel. In Escherichia coli O157:H7, this protein is Potassium-transporting ATPase potassium-binding subunit.